A 149-amino-acid chain; its full sequence is Probable flagellum biosynthesis repressor protein FlbT (149 aa).

Belongs to the FlbT family.

In terms of biological role, has a post-transcriptional repressor function in flagellum biogenesis. Associates with the 5'-UTR of fljK mRNA and promotes its degradation. The chain is Probable flagellum biosynthesis repressor protein FlbT from Rhizobium etli (strain CIAT 652).